Here is a 649-residue protein sequence, read N- to C-terminus: Extracellular metalloproteinase 4 (649 aa).

Positions 1–18 are cleaved as a signal peptide; sequence MHGLLLAGLLALPSNVLG. Positions 19–260 are excised as a propeptide; sequence HPAEPPNSVN…VHGVVDYVAS (242 aa). A Zn(2+)-binding site is contributed by His443. The active site involves Glu444. His447 contacts Zn(2+). Residues Asn494 and Asn609 are each glycosylated (N-linked (GlcNAc...) asparagine).

This sequence belongs to the peptidase M36 family. The cofactor is Zn(2+).

Its subcellular location is the secreted. Secreted metalloproteinase probably acting as a virulence factor. This chain is Extracellular metalloproteinase 4 (MEP4), found in Arthroderma otae (strain ATCC MYA-4605 / CBS 113480) (Microsporum canis).